The chain runs to 220 residues: Peptidyl-tRNA hydrolase (220 aa).

Tyr-14 provides a ligand contact to tRNA. His-19 (proton acceptor) is an active-site residue. Residues Phe-60, Asn-62, and Asn-106 each coordinate tRNA.

This sequence belongs to the PTH family. Monomer.

The protein localises to the cytoplasm. The enzyme catalyses an N-acyl-L-alpha-aminoacyl-tRNA + H2O = an N-acyl-L-amino acid + a tRNA + H(+). Hydrolyzes ribosome-free peptidyl-tRNAs (with 1 or more amino acids incorporated), which drop off the ribosome during protein synthesis, or as a result of ribosome stalling. Functionally, catalyzes the release of premature peptidyl moieties from peptidyl-tRNA molecules trapped in stalled 50S ribosomal subunits, and thus maintains levels of free tRNAs and 50S ribosomes. This chain is Peptidyl-tRNA hydrolase, found in Campylobacter hominis (strain ATCC BAA-381 / DSM 21671 / CCUG 45161 / LMG 19568 / NCTC 13146 / CH001A).